Consider the following 91-residue polypeptide: DNA-directed RNA polymerase subunit omega (91 aa).

Positions 66–91 (QMPPPLPNFPGAANREATGAEDAAGE) are disordered.

The protein belongs to the RNA polymerase subunit omega family. As to quaternary structure, the RNAP catalytic core consists of 2 alpha, 1 beta, 1 beta' and 1 omega subunit. When a sigma factor is associated with the core the holoenzyme is formed, which can initiate transcription.

It catalyses the reaction RNA(n) + a ribonucleoside 5'-triphosphate = RNA(n+1) + diphosphate. Functionally, promotes RNA polymerase assembly. Latches the N- and C-terminal regions of the beta' subunit thereby facilitating its interaction with the beta and alpha subunits. The chain is DNA-directed RNA polymerase subunit omega from Acidithiobacillus ferrooxidans (strain ATCC 23270 / DSM 14882 / CIP 104768 / NCIMB 8455) (Ferrobacillus ferrooxidans (strain ATCC 23270)).